We begin with the raw amino-acid sequence, 270 residues long: Insulin-like growth factor-binding protein-like 1 (270 aa).

Residues 1–17 form the signal peptide; it reads MPRLPLLLLLLPSLARG. The region spanning 26 to 101 is the IGFBP N-terminal domain; the sequence is RHPECSPCQQ…PEGTGLCVCA (76 aa). 7 disulfides stabilise this stretch: C30–C55, C33–C57, C38–C58, C44–C61, C69–C83, C77–C98, and C107–C143. Residues 87 to 145 form the Kazal-like domain; it reads ASGTAPEGTGLCVCAQRGAVCGSDGRSYSSICALRLRARHAPRAHHGHLHKARDGPCEF. The Ig-like C2-type domain maps to 147 to 251; that stretch reads PVVLMPPRDI…GEAQSHGTVT (105 aa). N158 carries N-linked (GlcNAc...) asparagine glycosylation. The cysteines at positions 168 and 235 are disulfide-linked.

The protein localises to the secreted. Its function is as follows. IGF-binding proteins prolong the half-life of IGFs and have been shown to either inhibit or stimulate the growth promoting effects of the IGFs in cell culture. They alter the interaction of IGFs with their cell surface receptors. The sequence is that of Insulin-like growth factor-binding protein-like 1 (Igfbpl1) from Mus musculus (Mouse).